Here is a 303-residue protein sequence, read N- to C-terminus: Zinc transporter ZIP9-B (303 aa).

Residues 7 to 27 (ISLLSLAMLVGCYVSGIIPLA) form a helical membrane-spanning segment. A glycan (N-linked (GlcNAc...) asparagine) is linked at Asn-29. The next 5 membrane-spanning stretches (helical) occupy residues 35 to 55 (LKLVTVLGAGLLCGTALAVIV), 102 to 122 (AYIGVSLVLGFVFMLLVDQIG), 142 to 162 (ITTTLGLVVHAAADGVALGAA), 172 to 192 (LIVFVAIMLHKAPAAFGLVSF), and 206 to 226 (HLLVFALAAPLLSMLTYLGLS). Asn-237 carries an N-linked (GlcNAc...) asparagine glycan. Transmembrane regions (helical) follow at residues 240 to 260 (GVAMLFSAGTFLYVATVHVLP) and 282 to 302 (LEVCALVLGCLIPLVLSIGHQ).

This sequence belongs to the ZIP transporter (TC 2.A.5) family.

It is found in the golgi apparatus. It localises to the trans-Golgi network membrane. Its subcellular location is the cell membrane. The protein resides in the cytoplasm. The protein localises to the perinuclear region. It is found in the mitochondrion. It localises to the nucleus. It catalyses the reaction Zn(2+)(in) = Zn(2+)(out). Its function is as follows. Transports zinc ions across cell and organelle membranes into the cytoplasm and regulates intracellular zinc homeostasis. Participates in the zinc ions efflux out of the secretory compartments. Regulates intracellular zinc level, resulting in the enhancement of AKT1 and MAPK3/MAPK1 (Erk1/2) phosphorylation in response to the BCR activation. Also functions as a membrane androgen receptor that mediates, through a G protein, the non-classical androgen signaling pathway, characterized by the activation of MAPK3/MAPK1 (Erk1/2) and transcription factors CREB1 or ATF1. Moreover, has dual functions as a membrane-bound androgen receptor and as an androgen-dependent zinc transporter both of which are mediated through an inhibitory G protein (Gi) that mediates both MAP kinase and zinc signaling leading to the androgen-dependent apoptotic process. The polypeptide is Zinc transporter ZIP9-B (slc39a9-b) (Xenopus laevis (African clawed frog)).